Consider the following 719-residue polypeptide: Photosystem I P700 chlorophyll a apoprotein A1 (719 aa).

Helical transmembrane passes span 60–83 (IFSA…FHGA), 146–169 (LYCT…FHYH), 185–209 (LNHH…HVSL), 281–299 (TAHH…GHMY), 336–359 (WHAQ…HHMY), 375–401 (LSLF…IFMV), 423–445 (AIIS…LYIH), and 521–539 (FLVH…LILL). The [4Fe-4S] cluster site is built by Cys-563 and Cys-572. A run of 2 helical transmembrane segments spans residues 579–600 (HVFL…HFSW) and 654–676 (LSAY…MFLF). His-665 contacts chlorophyll a'. Residues Met-673 and Tyr-681 each coordinate chlorophyll a. Trp-682 is a binding site for phylloquinone. The helical transmembrane segment at 714-719 (AVGVAH) threads the bilayer.

It belongs to the PsaA/PsaB family. The PsaA/B heterodimer binds the P700 chlorophyll special pair and subsequent electron acceptors. PSI consists of a core antenna complex that captures photons, and an electron transfer chain that converts photonic excitation into a charge separation. The eukaryotic PSI reaction center is composed of at least 11 subunits. P700 is a chlorophyll a/chlorophyll a' dimer, A0 is one or more chlorophyll a, A1 is one or both phylloquinones and FX is a shared 4Fe-4S iron-sulfur center. serves as cofactor.

Its subcellular location is the plastid. It is found in the chloroplast thylakoid membrane. The catalysed reaction is reduced [plastocyanin] + hnu + oxidized [2Fe-2S]-[ferredoxin] = oxidized [plastocyanin] + reduced [2Fe-2S]-[ferredoxin]. Its function is as follows. PsaA and PsaB bind P700, the primary electron donor of photosystem I (PSI), as well as the electron acceptors A0, A1 and FX. PSI is a plastocyanin-ferredoxin oxidoreductase, converting photonic excitation into a charge separation, which transfers an electron from the donor P700 chlorophyll pair to the spectroscopically characterized acceptors A0, A1, FX, FA and FB in turn. Oxidized P700 is reduced on the lumenal side of the thylakoid membrane by plastocyanin. The sequence is that of Photosystem I P700 chlorophyll a apoprotein A1 from Equisetum palustre (Marsh horsetail).